Consider the following 366-residue polypeptide: tRNA/tmRNA (uracil-C(5))-methyltransferase (366 aa).

S-adenosyl-L-methionine is bound by residues Q189, Y217, N222, E238, and D298. C323 functions as the Nucleophile in the catalytic mechanism. The Proton acceptor role is filled by E357.

The protein belongs to the class I-like SAM-binding methyltransferase superfamily. RNA M5U methyltransferase family. TrmA subfamily.

The catalysed reaction is uridine(54) in tRNA + S-adenosyl-L-methionine = 5-methyluridine(54) in tRNA + S-adenosyl-L-homocysteine + H(+). It catalyses the reaction uridine(341) in tmRNA + S-adenosyl-L-methionine = 5-methyluridine(341) in tmRNA + S-adenosyl-L-homocysteine + H(+). Dual-specificity methyltransferase that catalyzes the formation of 5-methyluridine at position 54 (m5U54) in all tRNAs, and that of position 341 (m5U341) in tmRNA (transfer-mRNA). The polypeptide is tRNA/tmRNA (uracil-C(5))-methyltransferase (Shewanella putrefaciens (strain CN-32 / ATCC BAA-453)).